Reading from the N-terminus, the 278-residue chain is 4-deoxy-L-threo-5-hexosulose-uronate ketol-isomerase (278 aa).

Zn(2+)-binding residues include His-196, His-198, Glu-203, and His-245.

The protein belongs to the KduI family. Requires Zn(2+) as cofactor.

The enzyme catalyses 5-dehydro-4-deoxy-D-glucuronate = 3-deoxy-D-glycero-2,5-hexodiulosonate. It participates in glycan metabolism; pectin degradation; 2-dehydro-3-deoxy-D-gluconate from pectin: step 4/5. Its function is as follows. Catalyzes the isomerization of 5-dehydro-4-deoxy-D-glucuronate to 3-deoxy-D-glycero-2,5-hexodiulosonate. This is 4-deoxy-L-threo-5-hexosulose-uronate ketol-isomerase from Edwardsiella ictaluri (strain 93-146).